The following is a 627-amino-acid chain: tRNA uridine 5-carboxymethylaminomethyl modification enzyme MnmG (627 aa).

Residues 16 to 21, valine 128, and serine 183 contribute to the FAD site; that span reads GAGHAG. NAD(+) is bound at residue 275–289; it reads GPRYCPSIEDKVMRF. Glutamine 372 is an FAD binding site.

This sequence belongs to the MnmG family. In terms of assembly, homodimer. Heterotetramer of two MnmE and two MnmG subunits. FAD serves as cofactor.

It localises to the cytoplasm. In terms of biological role, NAD-binding protein involved in the addition of a carboxymethylaminomethyl (cmnm) group at the wobble position (U34) of certain tRNAs, forming tRNA-cmnm(5)s(2)U34. The protein is tRNA uridine 5-carboxymethylaminomethyl modification enzyme MnmG of Geobacter sulfurreducens (strain ATCC 51573 / DSM 12127 / PCA).